The chain runs to 128 residues: Kinase-associated lipoprotein B (128 aa).

The first 25 residues, 1 to 25, serve as a signal peptide directing secretion; that stretch reads MSTFETGSIVKGFYKTGVYIGEITA. Residue cysteine 26 is the site of N-palmitoyl cysteine attachment. Cysteine 26 is lipidated: S-diacylglycerol cysteine.

It is found in the cell membrane. May play a role in the activation or the expression of KinB. This is Kinase-associated lipoprotein B (kapB) from Bacillus subtilis (strain 168).